Reading from the N-terminus, the 239-residue chain is Tetraspanin-9 (239 aa).

Over M1–M13 the chain is Cytoplasmic. The chain crosses the membrane as a helical span at residues F14–L34. The Extracellular segment spans residues S35 to N55. The chain crosses the membrane as a helical span at residues L56–I76. The Cytoplasmic segment spans residues K77–S85. Residues F86–V106 traverse the membrane as a helical segment. Topologically, residues Y107–H203 are extracellular. The N-linked (GlcNAc...) asparagine glycan is linked to N180. Residues L204–M224 traverse the membrane as a helical segment. The Cytoplasmic portion of the chain corresponds to T225 to A239.

Belongs to the tetraspanin (TM4SF) family.

The protein localises to the membrane. This chain is Tetraspanin-9 (tspan9), found in Danio rerio (Zebrafish).